The following is a 361-amino-acid chain: Protein RecA (361 aa).

77–84 (GPESSGKT) contacts ATP.

Belongs to the RecA family.

It localises to the cytoplasm. Functionally, can catalyze the hydrolysis of ATP in the presence of single-stranded DNA, the ATP-dependent uptake of single-stranded DNA by duplex DNA, and the ATP-dependent hybridization of homologous single-stranded DNAs. It interacts with LexA causing its activation and leading to its autocatalytic cleavage. The protein is Protein RecA of Brucella abortus (strain S19).